Reading from the N-terminus, the 93-residue chain is Small ribosomal subunit protein uS19 (93 aa).

Belongs to the universal ribosomal protein uS19 family.

Its function is as follows. Protein S19 forms a complex with S13 that binds strongly to the 16S ribosomal RNA. This Alkaliphilus metalliredigens (strain QYMF) protein is Small ribosomal subunit protein uS19.